A 351-amino-acid chain; its full sequence is CREB homolog crh-2 (351 aa).

2 disordered regions span residues 46–104 (EPCT…EPLG) and 119–149 (SPSA…HQQQ). Positions 82–95 (GSSSGSPSSSLSSP) are enriched in low complexity. The 64-residue stretch at 282-345 (SLKIVRRKIK…RDLQQKLHQY (64 aa)) folds into the bZIP domain. A basic motif region spans residues 284-304 (KIVRRKIKNKLSAQESRRKRK). A leucine-zipper region spans residues 307–314 (IDALEGRL).

It belongs to the bZIP family.

The protein resides in the nucleus. Its function is as follows. Transcription factor. Plays a role in regulating the developmentally arrested larval state known as dauer, when induced by long-term exposure to the Gram-negative bacterium P.aeruginosa PAO1, but dispensable for dauer formation induced by starvation. Involved in regulating expression of microRNA mir-243, during long-term exposure to P.aeruginosa PAO1. This is CREB homolog crh-2 from Caenorhabditis elegans.